The sequence spans 101 residues: Guanyl-specific ribonuclease Po1 (101 aa).

Residue Q1 is modified to Pyrrolidone carboxylic acid. Disulfide bonds link C7–C84, C9–C99, and C48–C82. Residue H36 is part of the active site. The active-site Proton acceptor is the E54. The active-site Proton donor is the H87.

This sequence belongs to the ribonuclease N1/T1 family.

It carries out the reaction [RNA] containing guanosine + H2O = an [RNA fragment]-3'-guanosine-3'-phosphate + a 5'-hydroxy-ribonucleotide-3'-[RNA fragment].. Its activity is regulated as follows. Inhibited by divalent cations. Inhibition decreases in the order zinc, lead, cadmium, nickel, mercury. This is Guanyl-specific ribonuclease Po1 from Pleurotus ostreatus (Oyster mushroom).